We begin with the raw amino-acid sequence, 262 residues long: Indole-3-glycerol phosphate synthase (262 aa).

This sequence belongs to the TrpC family.

The enzyme catalyses 1-(2-carboxyphenylamino)-1-deoxy-D-ribulose 5-phosphate + H(+) = (1S,2R)-1-C-(indol-3-yl)glycerol 3-phosphate + CO2 + H2O. Its pathway is amino-acid biosynthesis; L-tryptophan biosynthesis; L-tryptophan from chorismate: step 4/5. This chain is Indole-3-glycerol phosphate synthase, found in Bordetella avium (strain 197N).